The following is a 244-amino-acid chain: Protein TIFY 10b (244 aa).

A Tify domain is found at 97 to 132 (QEPEKRQLTIFYGGKVLVFNDFPADKAKGLMQLASK). The segment at 174 to 244 (QKPARANASD…AVVKPIERGQ (71 aa)) is disordered. Positions 185-210 (PIARKASLHRFLEKRKDRLNAKTPYQ) match the Jas motif. The short motif at 187 to 194 (ARKASLHR) is the Nuclear localization signal element. Over residues 194-204 (RFLEKRKDRLN) the composition is skewed to basic and acidic residues.

This sequence belongs to the TIFY/JAZ family. As to quaternary structure, interacts with BHLH148. Interacts with COI1A and COI1B in a coronatine-dependent manner. Coronatine is an analog of jasmonoyl isoleucine (JA-Ile). Post-translationally, ubiquitinated. Targeted for degradation by the SCF(COI1) E3 ubiquitin ligase-proteasome pathway during jasmonate signaling.

The protein localises to the nucleus. Its function is as follows. Repressor of jasmonate responses. This chain is Protein TIFY 10b, found in Oryza sativa subsp. japonica (Rice).